The sequence spans 1543 residues: MYAAVEHGPVLCSDSNILCLSWKGRVPKSEKEKPVCRRRYYEEGWLATGNGRGVVGVTFTSSHCRRDRSTPQRINFNLRGHNSEVVLVRWNEPYQKLATCDADGGIFVWIQYEGRWSVELVNDRGAQVSDFTWSHDGTQALISYRDGFVLVGSVSGQRHWSSEINLESQITCGIWTPDDQQVLFGTADGQVIVMDCHGRMLAHVLLHESDGVLGMSWNYPIFLVEDSSESDTDSDDYAPPQDGPAAYPIPVQNIKPLLTVSFTSGDISLMNNYDDLSPTVIRSGLKEVVAQWCTQGDLLAVAGMERQTQLGELPNGPLLKSAMVKFYNVRGEHIFTLDTLVQRPIISICWGHRDSRLLMASGPALYVVRVEHRVSSLQLLCQQAIASTLREDKDVSKLTLPPRLCSYLSTAFIPTIKPPIPDPNNMRDFVSYPSAGNERLHCTMKRTEDDPEVGGPCYTLYLEYLGGLVPILKGRRISKLRPEFVIMDPRTDSKPDEIYGNSLISTVIDSCNCSDSSDIELSDDWAAKKSPKISRASKSPKLPRISIEARKSPKLPRAAQELSRSPRLPLRKPSVGSPSLTRREFPFEDITQHNYLAQVTSNIWGTKFKIVGLAAFLPTNLGAVIYKTSLLHLQPRQMTIYLPEVRKISMDYINLPVFNPNVFSEDEDDLPVTGASGVPENSPPCTVNIPIAPIHSSAQAMSPTQSIGLVQSLLANQNVQLDVLTNQTTAVGTAEHAGDSATQYPVSNRYSNPGQVIFGSVEMGRIIQNPPPLSLPPPPQGPMQLSTVGHGDRDHEHLQKSAKALRPTPQLAAEGDAVVFSAPQEVQVTKINPPPPYPGTIPAAPTTAAPPPPLPPPQPPVDVCLKKGDFSLYPTSVHYQTPLGYERITTFDSSGNVEEVCRPRTRMLCSQNTYTLPGPGSSATLRLTATEKKVPQPCSSATLNRLTVPRYSIPTGDPPPYPEIASQLAQGRGAAQRSDNSLIHATLRRNNREATLKMAQLADSPRAPLQPLAKSKGGPGGVVTQLPARPPPALYTCSQCSGTGPSSQPGASLAHTASASPLASQSSYSLLSPPDSARDRTDYVNSAFTEDEALSQHCQLEKPLRHPPLPEAAVTLKRPPPYQWDPMLGEDVWVPQERTAQTSGPNPLKLSSLMLSQGQHLDVSRLPFISPKSPASPTATFQTGYGMGVPYPGSYNNPPLPGVQAPCSPKDALSPTQFAQQEPAVVLQPLYPPSLSYCTLPPMYPGSSTCSSLQLPPVALHPWSSYSACPPMQNPQGTLPPKPHLVVEKPLVSPPPADLQSHLGTEVMVETADNFQEVLSLTESPVPQRTEKFGKKNRKRLDSRAEEGSVQAITEGKVKKEARTLSDFNSLISSPHLGREKKKVKSQKDQLKSKKLNKTNEFQDSSESEPELFISGDELMNQSQGSRKGWKSKRSPRAAGELEEAKCRRASEKEDGRLGSQGFVYVMANKQPLWNEATQVYQLDFGGRVTQESAKNFQIELEGRQVMQFGRIDGSAYILDFQYPFSAVQAFAVALANVTQRLK.

WD repeat units lie at residues 6-72, 73-115, 116-158, 159-237, 238-276, 277-334, and 335-372; these read EHGP…STPQ, RINF…YEGR, WSVE…SGQR, HWSS…SDDY, APPQ…YDDL, SPTV…GEHI, and FTLD…RVEH. The SOCS box domain maps to 364 to 414; sequence ALYVVRVEHRVSSLQLLCQQAIASTLREDKDVSKLTLPPRLCSYLSTAFIP. Disordered regions lie at residues 530 to 577 and 829 to 850; these read SPKI…SVGS and TKIN…TAAP. At Ser-577 the chain carries Phosphoserine. Asymmetric dimethylarginine is present on residues Arg-945 and Arg-950. Disordered stretches follow at residues 1004-1058, 1326-1355, and 1367-1453; these read SPRA…HTAS, VPQR…AITE, and DFNS…ASEK. The segment covering 1036 to 1050 has biased composition (polar residues); it reads TCSQCSGTGPSSQPG. Residues 1329 to 1347 are compositionally biased toward basic and acidic residues; that stretch reads RTEKFGKKNRKRLDSRAEE. Residues Ser-1343 and Ser-1374 each carry the phosphoserine modification. Basic and acidic residues predominate over residues 1443–1453; sequence EEAKCRRASEK. Residues 1466–1543 form a TUB region; it reads VMANKQPLWN…ALANVTQRLK (78 aa).

The protein belongs to the TUB family. Expressed mainly in the brain, skeletal muscle, testis and kidney.

It is found in the cytoplasm. Its pathway is protein modification; protein ubiquitination. May be a substrate-recognition component of a SCF-like ECS (Elongin-Cullin-SOCS-box protein) E3 ubiquitin ligase complex which mediates the ubiquitination and subsequent proteasomal degradation of target proteins. This Homo sapiens (Human) protein is Tubby-related protein 4 (TULP4).